The primary structure comprises 718 residues: Nucleolar protein 11 (718 aa).

An N6-methyllysine modification is found at Lys-346.

Interacts with UTP4. Interacts with FBL/fibrillarin in a transcription-dependent manner. May associate with the proposed t-UTP subcomplex of the SSU processome containing at least UTP4, WDR43, HEATR1, UTP15, WDR75.

Its subcellular location is the nucleus. It localises to the nucleolus. Ribosome biogenesis factor. May be required for both optimal rDNA transcription and small subunit (SSU) pre-rRNA processing at sites A', A0, 1 and 2b. In Bos taurus (Bovine), this protein is Nucleolar protein 11 (NOL11).